Here is a 239-residue protein sequence, read N- to C-terminus: RNA polymerase sigma factor FliA (239 aa).

The tract at residues Leu-16–Trp-88 is sigma-70 factor domain-2. The Interaction with polymerase core subunit RpoC signature appears at Asp-43–Gln-46. Positions Asn-96–Gln-166 are sigma-70 factor domain-3. The sigma-70 factor domain-4 stretch occupies residues Ala-185–Arg-233. Residues Leu-207–Ser-226 constitute a DNA-binding region (H-T-H motif).

This sequence belongs to the sigma-70 factor family. FliA subfamily.

The protein localises to the cytoplasm. Functionally, sigma factors are initiation factors that promote the attachment of RNA polymerase to specific initiation sites and are then released. This sigma factor controls the expression of flagella-related genes. The protein is RNA polymerase sigma factor FliA of Salmonella typhi.